A 151-amino-acid polypeptide reads, in one-letter code: Large ribosomal subunit protein uL13 (151 aa).

This sequence belongs to the universal ribosomal protein uL13 family. In terms of assembly, part of the 50S ribosomal subunit.

This protein is one of the early assembly proteins of the 50S ribosomal subunit, although it is not seen to bind rRNA by itself. It is important during the early stages of 50S assembly. This chain is Large ribosomal subunit protein uL13, found in Rippkaea orientalis (strain PCC 8801 / RF-1) (Cyanothece sp. (strain PCC 8801)).